The chain runs to 157 residues: Beta-defensin 125 (157 aa).

An N-terminal signal peptide occupies residues 1–20 (MNLLMLTFIICGLLTQVTKG). Disulfide bonds link Cys27–Cys55, Cys35–Cys49, and Cys39–Cys56. A disordered region spans residues 109–157 (GETITPETNTPETTMPPSETTSSKTTMPPSETATSETMPPPSQTALTHN). Low complexity predominate over residues 110-140 (ETITPETNTPETTMPPSETTSSKTTMPPSET). Residues 141 to 157 (ATSETMPPPSQTALTHN) show a composition bias toward polar residues.

It belongs to the beta-defensin family.

The protein localises to the secreted. Its function is as follows. Has antibacterial activity. The sequence is that of Beta-defensin 125 (DEFB125) from Pongo pygmaeus (Bornean orangutan).